Here is a 303-residue protein sequence, read N- to C-terminus: NAD(+)--arginine ADP-ribosyltransferase Lart1 (303 aa).

Its subcellular location is the secreted. It catalyses the reaction L-arginyl-[protein] + NAD(+) = N(omega)-(ADP-D-ribosyl)-L-arginyl-[protein] + nicotinamide + H(+). ADP-ribosyltransferase that targets a specific class of NAD(+)-dependent glutamate dehydrogenase (GDH) enzymes found in fungi and protists, including many natural hosts of Legionella. Acts by targeting a conserved arginine residue in the NAD(+)-binding pocket of GDH, thereby blocking oxidative deamination of glutamate. Lart1 may target amoeba GDH to prevent a conserved stress response. In vitro, acts on Glud2 from the amoeba Dictyostelium discoideum (DdGluD2) and yeast Gdh2p but does not act on human or Legionella GDH homologs. This chain is NAD(+)--arginine ADP-ribosyltransferase Lart1, found in Legionella pneumophila subsp. pneumophila (strain Philadelphia 1 / ATCC 33152 / DSM 7513).